We begin with the raw amino-acid sequence, 142 residues long: Large ribosomal subunit protein uL11 (142 aa).

The protein belongs to the universal ribosomal protein uL11 family. In terms of assembly, part of the ribosomal stalk of the 50S ribosomal subunit. Interacts with L10 and the large rRNA to form the base of the stalk. L10 forms an elongated spine to which L12 dimers bind in a sequential fashion forming a multimeric L10(L12)X complex. Post-translationally, one or more lysine residues are methylated.

Forms part of the ribosomal stalk which helps the ribosome interact with GTP-bound translation factors. In Mycoplasma capricolum subsp. capricolum (strain California kid / ATCC 27343 / NCTC 10154), this protein is Large ribosomal subunit protein uL11.